The sequence spans 199 residues: Fe/S biogenesis protein NfuA (199 aa).

The [4Fe-4S] cluster site is built by C151 and C154.

Belongs to the NfuA family. In terms of assembly, homodimer. It depends on [4Fe-4S] cluster as a cofactor.

Functionally, involved in iron-sulfur cluster biogenesis. Binds a 4Fe-4S cluster, can transfer this cluster to apoproteins, and thereby intervenes in the maturation of Fe/S proteins. Could also act as a scaffold/chaperone for damaged Fe/S proteins. The chain is Fe/S biogenesis protein NfuA from Xylella fastidiosa (strain 9a5c).